A 130-amino-acid polypeptide reads, in one-letter code: Small ribosomal subunit protein uS11 (130 aa).

The protein belongs to the universal ribosomal protein uS11 family. Part of the 30S ribosomal subunit. Interacts with proteins S7 and S18. Binds to IF-3.

Functionally, located on the platform of the 30S subunit, it bridges several disparate RNA helices of the 16S rRNA. Forms part of the Shine-Dalgarno cleft in the 70S ribosome. The polypeptide is Small ribosomal subunit protein uS11 (Prochlorococcus marinus (strain NATL1A)).